The following is an 81-amino-acid chain: Large ribosomal subunit protein bL27 (81 aa).

Residues 1-22 (MAHKTGQSSSSNGRESKSKRLG) form a disordered region.

Belongs to the bacterial ribosomal protein bL27 family.

In Opitutus terrae (strain DSM 11246 / JCM 15787 / PB90-1), this protein is Large ribosomal subunit protein bL27.